Reading from the N-terminus, the 214-residue chain is Octanoyltransferase (214 aa).

The BPL/LPL catalytic domain occupies 36-214; it reads GRESEMVWLL…QQKFDTIFLQ (179 aa). Residues 75 to 82, 147 to 149, and 160 to 162 contribute to the substrate site; these read RGGKYSYH, AFG, and GFS. Cys-178 (acyl-thioester intermediate) is an active-site residue.

This sequence belongs to the LipB family.

It localises to the cytoplasm. The catalysed reaction is octanoyl-[ACP] + L-lysyl-[protein] = N(6)-octanoyl-L-lysyl-[protein] + holo-[ACP] + H(+). The protein operates within protein modification; protein lipoylation via endogenous pathway; protein N(6)-(lipoyl)lysine from octanoyl-[acyl-carrier-protein]: step 1/2. In terms of biological role, catalyzes the transfer of endogenously produced octanoic acid from octanoyl-acyl-carrier-protein onto the lipoyl domains of lipoate-dependent enzymes. Lipoyl-ACP can also act as a substrate although octanoyl-ACP is likely to be the physiological substrate. This Anaplasma marginale (strain Florida) protein is Octanoyltransferase.